Here is a 1099-residue protein sequence, read N- to C-terminus: MEILYTEITQDLTEGLLEIALEELEKNRKVYYIVPSSMSFEKEKEILERLAKGSDTAVFYLLVTRFKQLPYYFDKREKATMKTELGTVGLSMLFRRILRSFKKDEIPLYFSLQDSAGFLEMLIQLRAELLTANLSVENLPDNPKNQELKKILTTFEAELSVEYANYSEFGDFTNRLADGEFDQQLKDVTIIIDGYTRFSAEEELFIESIQEKVARFVVGTYSDENSLTAGSETIYVGTSQMITRFRNKYPVELRKIASSSVNEVYSKLTRMLDLDSRFVITDEKIELKAEDEKYFRIWEAENQKVEIERVAKEIRQKISQGAFFKDFTVLVGDPAAYEITLKEIFDLYEIPFFYAQEESMSQHPLVIFFESLFAIKKNNYRTDDVVNLLKSKVYTDVNLDEEVIDYFEYYVQKYKISGRKKFTEEFIESEFSQIELVNEMREKLLGSESPLQVFLGNNRQKTGKKWVSDLQALLENGNVMANMNAYFSAAELQNEHQMADKHEQVWQMLISTLNEFFAVFSDEKLKSVEFLDILLAGLKNAKYRQIPANVDVVNVKDYELVEPKTNNYIYAIGLSQTNFPRIKKNSTLLSDEERLEINQTTDENQFIEQLNVANYQKNQFTVLSLINSAKESLVLSMPQIMTNEQGEFSPVFQLFLKDADEKILQKIQGVNLFESLEHIGNSRSVIAMIGQIERELVESEETNEDKRVFWSSIFRILVKSNADFQKILLDLAKDIDTVNLAPDTLEQIYGDKIYASVSSFERFYNCEYQYFLENTLSLETFENIDINSKIVGNFFHEVFEKVMKETDLSAENFDEKLTLFLQEVDKNYSRYFTQDATARFTWSNLEEIVRQTATVLKATVSTDELKTLLTESSFGLSKSELGNFSVDDIYLRGRIDRLDQLSTDYLGVIDYKSSAHSFKLQEAYDGLSLQFMTYLDVIKQAFPNQKIWGALYLQFKNQPINLSEINQLSEIANILKESMRYDGLVLEDAAEQIKGIENIALKNTNSYNEEEFEQLLKLNEEHYRAAGQRLKNGKIAINPIMKRSEGIDQSGNVRGCRYCPLKSICRFEANIHMNEHSREIGQKSQAEILAELKGEGRDE.

Residues cysteine 766, cysteine 1056, cysteine 1059, and cysteine 1065 each coordinate [4Fe-4S] cluster.

Belongs to the helicase family. AddB/RexB type 2 subfamily. As to quaternary structure, heterodimer of AddA and RexB. Mg(2+) serves as cofactor. It depends on [4Fe-4S] cluster as a cofactor.

In terms of biological role, the heterodimer acts as both an ATP-dependent DNA helicase and an ATP-dependent, dual-direction single-stranded exonuclease. Recognizes the chi site generating a DNA molecule suitable for the initiation of homologous recombination. This subunit has 5' -&gt; 3' nuclease activity but not helicase activity. The sequence is that of ATP-dependent helicase/deoxyribonuclease subunit B from Lactococcus lactis subsp. cremoris (strain SK11).